The primary structure comprises 255 residues: 4-diphosphocytidyl-2-C-methyl-D-erythritol kinase (255 aa).

Lys-6 is a catalytic residue. 95–105 contacts ATP; that stretch reads PVCAGLGGGSS. The active site involves Asp-137.

It belongs to the GHMP kinase family. IspE subfamily.

The enzyme catalyses 4-CDP-2-C-methyl-D-erythritol + ATP = 4-CDP-2-C-methyl-D-erythritol 2-phosphate + ADP + H(+). Its pathway is isoprenoid biosynthesis; isopentenyl diphosphate biosynthesis via DXP pathway; isopentenyl diphosphate from 1-deoxy-D-xylulose 5-phosphate: step 3/6. In terms of biological role, catalyzes the phosphorylation of the position 2 hydroxy group of 4-diphosphocytidyl-2C-methyl-D-erythritol. The chain is 4-diphosphocytidyl-2-C-methyl-D-erythritol kinase from Campylobacter jejuni subsp. doylei (strain ATCC BAA-1458 / RM4099 / 269.97).